The sequence spans 233 residues: Cilia- and flagella-associated protein 299 (233 aa).

In terms of tissue distribution, abundantly expressed in testis, specifically in spermatogonia and primary spermatocytes but not in secondary spermatocytes and spermatids.

Its subcellular location is the cytoplasm. It is found in the nucleus. Its function is as follows. May be involved in spermatogenesis. This Mus musculus (Mouse) protein is Cilia- and flagella-associated protein 299.